Consider the following 1320-residue polypeptide: Mediator of RNA polymerase II transcription subunit 15 (1320 aa).

Residues 235-244 show a composition bias toward polar residues; that stretch reads QQASLNQLTP. 5 disordered regions span residues 235–283, 372–398, 540–688, 702–791, and 1233–1270; these read QQAS…KPQQ, KNMMAQQSAAALQQGQQQPRQMGPQQA, QLQQ…QQQT, QTQQ…PTEQ, and DSSSAEPPTEQVNKKRSHDSLEISPAESDSSLLNDSKK. 3 stretches are compositionally biased toward low complexity: residues 245-283, 375-398, and 540-554; these read QQRAQLQQRQQSTQQSQSAPPQAPQVAQSQQVPAQKPQQ, MAQQSAAALQQGQQQPRQMGPQQA, and QLQQTQEQDPQHTQL. Residues 555-587 are compositionally biased toward polar residues; the sequence is ADSFSQRQFTSPTLAKPSANVSTIAQQQTQPTA. Low complexity-rich tracts occupy residues 588-624, 634-688, and 702-780; these read LSQSHPQQQQGSQAQQQLLQQQQGSQAQQQLLQQQQQ, QQQT…QQQT, and QTQQ…PQQT.

The protein belongs to the Mediator complex subunit 15 family. As to quaternary structure, component of the Mediator complex.

The protein resides in the nucleus. Component of the Mediator complex, a coactivator involved in regulated gene transcription of nearly all RNA polymerase II-dependent genes. Mediator functions as a bridge to convey information from gene-specific regulatory proteins to the basal RNA polymerase II transcription machinery. Mediator is recruited to promoters by direct interactions with regulatory proteins and serves as a scaffold for the assembly of a functional preinitiation complex with RNA polymerase II and the general transcription factors. The protein is Mediator of RNA polymerase II transcription subunit 15 (GAL11) of Eremothecium gossypii (strain ATCC 10895 / CBS 109.51 / FGSC 9923 / NRRL Y-1056) (Yeast).